The sequence spans 203 residues: Large ribosomal subunit protein bL25 (203 aa).

The protein belongs to the bacterial ribosomal protein bL25 family. CTC subfamily. Part of the 50S ribosomal subunit; part of the 5S rRNA/L5/L18/L25 subcomplex. Contacts the 5S rRNA. Binds to the 5S rRNA independently of L5 and L18.

In terms of biological role, this is one of the proteins that binds to the 5S RNA in the ribosome where it forms part of the central protuberance. The chain is Large ribosomal subunit protein bL25 from Psychromonas ingrahamii (strain DSM 17664 / CCUG 51855 / 37).